Reading from the N-terminus, the 374-residue chain is Phospho-2-dehydro-3-deoxyheptonate aldolase AMT16 (374 aa).

Belongs to the class-I DAHP synthase family.

It catalyses the reaction D-erythrose 4-phosphate + phosphoenolpyruvate + H2O = 7-phospho-2-dehydro-3-deoxy-D-arabino-heptonate + phosphate. Its pathway is mycotoxin biosynthesis. In terms of biological role, nonribosomal peptide synthetase; part of the gene clusters that mediate the biosynthesis of AM-toxins, host-selective toxins (HSTs) causing Alternaria blotch on apple, a worldwide distributed disease. AM-toxins are cyclic depsipeptides containing the 3 residues 2-hydroxy-isovaleric acid (2-HIV), dehydroalanine, L-alanine which are common for all 3 AM-toxins I to III. The fourth precursor is L-alpha-amino-methoxyphenyl-valeric acid (L-Amv) for AM-toxin I, L-alpha-amino-phenyl-valeric acid (L-Apv) for AM-toxin II, and L-alpha-amino-hydroxyphenyl-valeric acid (L-Ahv) for AM-toxin III. AM-toxins have two target sites for affecting susceptible apple cells; they cause invagination of the plasma membrane and electrolyte loss and chloroplast disorganization. The non-ribosomal peptide synthetase AMT1 contains 4 catalytic modules and is responsible for activation of each residue in AM-toxin. The aldo-keto reductase AMT2 catalyzes the conversion of 2-keto-isovaleric acid (2-KIV) to 2-hydroxy-isovaleric acid (2-HIV), one of the precursor residues incorporated by AMT1 during AM-toxin biosynthesis, by reduction of its ketone to an alcohol. The cytochrome P450 monooxygenase AMT3 and the thioesterase AMT4 are also important for AM-toxin production, but their exact function within the AM-toxin biosynthesis are not known yet. Up to 21 proteins (including AMT1 to AMT4) are predicted to be involved in AM-toxin biosynthesis since their expression ishighly up-regulated in AM-toxin-producing cultures. The protein is Phospho-2-dehydro-3-deoxyheptonate aldolase AMT16 of Alternaria alternata (Alternaria rot fungus).